Here is a 377-residue protein sequence, read N- to C-terminus: Palmitoyltransferase ZDHHC16 (377 aa).

Residues 1–77 are Cytoplasmic-facing; that stretch reads MRGQRSLLLG…VYWLVDNVIR (77 aa). Residues 78–98 form a helical membrane-spanning segment; sequence WFGVVFVVLVIVLTGSIVAIA. Residues 99–116 lie on the Lumenal side of the membrane; it reads YLCVLPLILRTYSVPRLC. The chain crosses the membrane as a helical span at residues 117 to 137; the sequence is WHFFYSHWNLILIVFHYYQAI. The Cytoplasmic portion of the chain corresponds to 138-198; sequence TTPPGYPPQG…NNCVGHYNHR (61 aa). Residues 155 to 205 enclose the DHHC domain; that stretch reads SICKKCIYPKPARTHHCSICNRCVLKMDHHCPWLNNCVGHYNHRYFFSFCF. C185 (S-palmitoyl cysteine intermediate) is an active-site residue. A helical transmembrane segment spans residues 199 to 219; that stretch reads YFFSFCFFMTLGCVYCSYGSW. Over 220–266 the chain is Lumenal; sequence DLFREAYAAIEKMKQLDKNKLQAVANQTYHQTPPPTFSFRERMTHKS. The chain crosses the membrane as a helical span at residues 267 to 287; it reads LVYLWFLCSSVALALGALTVW. The Cytoplasmic portion of the chain corresponds to 288 to 377; sequence HAVLISRGET…TAHSASVMAV (90 aa).

Belongs to the DHHC palmitoyltransferase family. In terms of assembly, interacts with ABL1. Interacts with COPS5/JAB1. Widely expressed.

Its subcellular location is the endoplasmic reticulum membrane. The catalysed reaction is L-cysteinyl-[protein] + hexadecanoyl-CoA = S-hexadecanoyl-L-cysteinyl-[protein] + CoA. Its function is as follows. Palmitoyl acyltransferase that mediates palmitoylation of proteins such as PLN and ZDHHC6. Required during embryonic heart development and cardiac function, possibly by mediating palmitoylation of PLN, thereby affecting PLN phosphorylation and homooligomerization. Also required for eye development. Palmitoylates ZDHHC6, affecting the quaternary assembly of ZDHHC6, its localization, stability and function. May play a role in DNA damage response. May be involved in apoptosis regulation. Involved in the proliferation of neural stem cells by regulating the FGF/ERK pathway. The protein is Palmitoyltransferase ZDHHC16 of Homo sapiens (Human).